Here is a 1465-residue protein sequence, read N- to C-terminus: DNA polymerase III PolC-type (1465 aa).

The Exonuclease domain maps to 427–583; that stretch reads YVVFDVETTG…YDAEATGRLL (157 aa).

It belongs to the DNA polymerase type-C family. PolC subfamily.

It localises to the cytoplasm. The catalysed reaction is DNA(n) + a 2'-deoxyribonucleoside 5'-triphosphate = DNA(n+1) + diphosphate. Required for replicative DNA synthesis. This DNA polymerase also exhibits 3' to 5' exonuclease activity. In Streptococcus pyogenes serotype M12 (strain MGAS2096), this protein is DNA polymerase III PolC-type.